Reading from the N-terminus, the 91-residue chain is Small ribosomal subunit protein bS16 (91 aa).

This sequence belongs to the bacterial ribosomal protein bS16 family.

The chain is Small ribosomal subunit protein bS16 from Latilactobacillus sakei subsp. sakei (strain 23K) (Lactobacillus sakei subsp. sakei).